Consider the following 67-residue polypeptide: Conotoxin reg3.8 (67 aa).

The N-terminal stretch at 1–22 is a signal peptide; it reads MMSKLGVLLTICLLLFPLSVLP. The propeptide occupies 23-50; the sequence is LDGDQLADQPARHAQSAERNARFHPVKR. Intrachain disulfides connect cysteine 51–cysteine 65, cysteine 52–cysteine 63, and cysteine 57–cysteine 66. Cysteine 66 carries the cysteine amide modification.

It belongs to the conotoxin M superfamily. Expressed by the venom duct.

It localises to the secreted. The polypeptide is Conotoxin reg3.8 (Conus regius (Crown cone)).